Here is a 210-residue protein sequence, read N- to C-terminus: Thymidylate kinase (210 aa).

10–17 (GLEGAGKS) serves as a coordination point for ATP.

The protein belongs to the thymidylate kinase family.

The enzyme catalyses dTMP + ATP = dTDP + ADP. In terms of biological role, phosphorylation of dTMP to form dTDP in both de novo and salvage pathways of dTTP synthesis. This Haemophilus influenzae (strain ATCC 51907 / DSM 11121 / KW20 / Rd) protein is Thymidylate kinase (tmk).